A 102-amino-acid chain; its full sequence is NADH-quinone oxidoreductase subunit K 1 (102 aa).

3 consecutive transmembrane segments (helical) span residues 3 to 23 (TLTT…LGIL), 29 to 49 (VGML…FMAF), and 62 to 82 (IIAL…LSII).

Belongs to the complex I subunit 4L family. As to quaternary structure, NDH-1 is composed of 14 different subunits. Subunits NuoA, H, J, K, L, M, N constitute the membrane sector of the complex.

Its subcellular location is the cell inner membrane. The catalysed reaction is a quinone + NADH + 5 H(+)(in) = a quinol + NAD(+) + 4 H(+)(out). Its function is as follows. NDH-1 shuttles electrons from NADH, via FMN and iron-sulfur (Fe-S) centers, to quinones in the respiratory chain. The immediate electron acceptor for the enzyme in this species is believed to be ubiquinone. Couples the redox reaction to proton translocation (for every two electrons transferred, four hydrogen ions are translocated across the cytoplasmic membrane), and thus conserves the redox energy in a proton gradient. The polypeptide is NADH-quinone oxidoreductase subunit K 1 (Syntrophobacter fumaroxidans (strain DSM 10017 / MPOB)).